Reading from the N-terminus, the 465-residue chain is Sodium-coupled neutral amino acid transporter 7 (465 aa).

11 helical membrane passes run 54–74, 82–102, 128–148, 177–197, 204–224, 244–264, 275–295, 318–338, 370–390, 394–414, and 427–447; these read AVFIVVNAALGAGLLNFPAAF, AGVTLQMCMMAFIITGLVILA, ICELAIAVYTFGTCIAFLIII, FTITLTSVLIILPLSIPKEIG, TLSVIGTWYVTIIVIVKYIWP, FNAMPTICFGFQCHVSSVPVF, WWGVVTISMIICLFVYTGTGV, VAVAIARAFIIICVVTSYPIL, ILQTLVWFCLTLILALFIPDI, ISLIGGLAACFIFVFPGLCLI, and SWNAMVAYGVIMVTIGAFIFG.

It belongs to the amino acid/polyamine transporter 2 family.

It is found in the lysosome membrane. Its subcellular location is the cell projection. The protein localises to the axon. The catalysed reaction is L-asparagine(in) + Na(+)(in) = L-asparagine(out) + Na(+)(out). It catalyses the reaction L-glutamine(in) + Na(+)(in) = L-glutamine(out) + Na(+)(out). Functionally, symporter that selectively cotransports sodium ions and amino acids, such as L-glutamine and L-asparagine from the lysosome into the cytoplasm and may participates in mTORC1 activation. The transport activity requires an acidic lysosomal lumen. The protein is Sodium-coupled neutral amino acid transporter 7 of Danio rerio (Zebrafish).